Here is a 247-residue protein sequence, read N- to C-terminus: Pleckstrin homology domain-containing family F member 2 (247 aa).

The region spanning 35-131 (VLIGEGVLTK…WMSHINKCVS (97 aa)) is the PH domain. The FYVE-type zinc-finger motif lies at 152 to 212 (DSEATVCMRC…VCEFCYKQLS (61 aa)). Zn(2+) contacts are provided by C158, C161, C175, C178, C183, C186, C204, and C207. A disordered region spans residues 213 to 247 (TGATLPPRSDSYSRQGSDFGSNNISDDDDDDDSSD). The span at 222–236 (DSYSRQGSDFGSNNI) shows a compositional bias: polar residues. Positions 237–247 (SDDDDDDDSSD) are enriched in acidic residues.

The protein localises to the early endosome membrane. It localises to the endoplasmic reticulum. Its function is as follows. May play a role in early endosome fusion upstream of RAB5, hence regulating receptor trafficking and fluid-phase transport. Enhances cellular sensitivity to TNF-induced apoptosis. The polypeptide is Pleckstrin homology domain-containing family F member 2 (plekhf2) (Danio rerio (Zebrafish)).